The chain runs to 585 residues: Glycerol-3-phosphate acyltransferase 1 (585 aa).

3 helical membrane-spanning segments follow: residues 126–146 (FFPYFMLVAFEGGSIIRAILL), 334–354 (TPLATLAMFIWLPIGFLLAVF), and 356–376 (ISVGVFLPYHVANFLASMSGV). The HXXXXD motif motif lies at 403-408 (HRTLLD).

The protein belongs to the GPAT/DAPAT family. In terms of tissue distribution, highly expressed in developing siliques and flower buds. Weakly or not expressed in roots, seedlings and leaves.

It is found in the membrane. It localises to the mitochondrion. The enzyme catalyses sn-glycerol 3-phosphate + an acyl-CoA = a 1-acyl-sn-glycero-3-phosphate + CoA. The protein operates within phospholipid metabolism; CDP-diacylglycerol biosynthesis; CDP-diacylglycerol from sn-glycerol 3-phosphate: step 1/3. In terms of biological role, esterifies acyl-group from acyl-ACP to the sn-1 position of glycerol-3-phosphate, an essential step in glycerolipid biosynthesis. Involved in pollen development, by being required for tapetum differentiation and male fertility. In addition to the sporophytic effect, it also exerts a gametophytic effect on pollen performance. The protein is Glycerol-3-phosphate acyltransferase 1 (GPAT1) of Arabidopsis thaliana (Mouse-ear cress).